Reading from the N-terminus, the 547-residue chain is Chaperonin GroEL (547 aa).

ATP is bound by residues 30-33 (TLGP), lysine 51, 87-91 (DGTTT), glycine 415, and aspartate 495.

The protein belongs to the chaperonin (HSP60) family. In terms of assembly, forms a cylinder of 14 subunits composed of two heptameric rings stacked back-to-back. Interacts with the co-chaperonin GroES.

The protein localises to the cytoplasm. It carries out the reaction ATP + H2O + a folded polypeptide = ADP + phosphate + an unfolded polypeptide.. Its function is as follows. Together with its co-chaperonin GroES, plays an essential role in assisting protein folding. The GroEL-GroES system forms a nano-cage that allows encapsulation of the non-native substrate proteins and provides a physical environment optimized to promote and accelerate protein folding. This Shewanella halifaxensis (strain HAW-EB4) protein is Chaperonin GroEL.